Consider the following 103-residue polypeptide: Acylphosphatase-2 (103 aa).

The region spanning 13 to 103 (SVDYEVFGRV…LQYNGFSTRY (91 aa)) is the Acylphosphatase-like domain. Active-site residues include R28 and N46.

It belongs to the acylphosphatase family.

It carries out the reaction an acyl phosphate + H2O = a carboxylate + phosphate + H(+). This Xenopus tropicalis (Western clawed frog) protein is Acylphosphatase-2 (acyp2).